We begin with the raw amino-acid sequence, 150 residues long: Large ribosomal subunit protein bL9 (150 aa).

This sequence belongs to the bacterial ribosomal protein bL9 family.

Binds to the 23S rRNA. This is Large ribosomal subunit protein bL9 from Enterococcus faecalis (strain ATCC 700802 / V583).